Reading from the N-terminus, the 656-residue chain is Chaperone protein DnaK (656 aa).

Disordered stretches follow at residues 488–532 (EMQE…DAVD) and 579–656 (YQQQ…DEDE). The segment covering 492–513 (EAEKHAEEDEKRRERIEARNEA) has biased composition (basic and acidic residues). A compositionally biased stretch (acidic residues) spans 523 to 532 (LLDENEDAVD). Positions 584-635 (GEGGAGAGAGAAGGMGGAGPGGMGGAGPGGMGGAGPGGMGGAGPGAGAGQQG) are enriched in gly residues. The span at 636–656 (DGEEFVDADFEDVDDEDDEDE) shows a compositional bias: acidic residues.

It belongs to the heat shock protein 70 family.

Its function is as follows. Acts as a chaperone. The chain is Chaperone protein DnaK from Natronomonas pharaonis (strain ATCC 35678 / DSM 2160 / CIP 103997 / JCM 8858 / NBRC 14720 / NCIMB 2260 / Gabara) (Halobacterium pharaonis).